Here is a 696-residue protein sequence, read N- to C-terminus: Elongation factor G (696 aa).

Residues 8-290 (ERYRNIGIMA…AVLDYLPSPL (283 aa)) form the tr-type G domain. Residues 17–24 (AHIDAGKT), 88–92 (DTPGH), and 142–145 (NKMD) contribute to the GTP site.

It belongs to the TRAFAC class translation factor GTPase superfamily. Classic translation factor GTPase family. EF-G/EF-2 subfamily.

The protein resides in the cytoplasm. Functionally, catalyzes the GTP-dependent ribosomal translocation step during translation elongation. During this step, the ribosome changes from the pre-translocational (PRE) to the post-translocational (POST) state as the newly formed A-site-bound peptidyl-tRNA and P-site-bound deacylated tRNA move to the P and E sites, respectively. Catalyzes the coordinated movement of the two tRNA molecules, the mRNA and conformational changes in the ribosome. This Nitrosomonas europaea (strain ATCC 19718 / CIP 103999 / KCTC 2705 / NBRC 14298) protein is Elongation factor G.